Consider the following 119-residue polypeptide: Large ribosomal subunit protein uL22 (119 aa).

The protein belongs to the universal ribosomal protein uL22 family. Part of the 50S ribosomal subunit.

This protein binds specifically to 23S rRNA; its binding is stimulated by other ribosomal proteins, e.g. L4, L17, and L20. It is important during the early stages of 50S assembly. It makes multiple contacts with different domains of the 23S rRNA in the assembled 50S subunit and ribosome. In terms of biological role, the globular domain of the protein is located near the polypeptide exit tunnel on the outside of the subunit, while an extended beta-hairpin is found that lines the wall of the exit tunnel in the center of the 70S ribosome. The protein is Large ribosomal subunit protein uL22 of Pelodictyon phaeoclathratiforme (strain DSM 5477 / BU-1).